Consider the following 91-residue polypeptide: Small ribosomal subunit protein bS16 (91 aa).

Belongs to the bacterial ribosomal protein bS16 family.

The chain is Small ribosomal subunit protein bS16 from Limosilactobacillus reuteri (strain DSM 20016) (Lactobacillus reuteri).